A 143-amino-acid polypeptide reads, in one-letter code: Large ribosomal subunit protein uL11 (143 aa).

The protein belongs to the universal ribosomal protein uL11 family. In terms of assembly, part of the ribosomal stalk of the 50S ribosomal subunit. Interacts with L10 and the large rRNA to form the base of the stalk. L10 forms an elongated spine to which L12 dimers bind in a sequential fashion forming a multimeric L10(L12)X complex. In terms of processing, one or more lysine residues are methylated.

Forms part of the ribosomal stalk which helps the ribosome interact with GTP-bound translation factors. The protein is Large ribosomal subunit protein uL11 of Cupriavidus metallidurans (strain ATCC 43123 / DSM 2839 / NBRC 102507 / CH34) (Ralstonia metallidurans).